The chain runs to 318 residues: Methionyl-tRNA formyltransferase (318 aa).

(6S)-5,6,7,8-tetrahydrofolate is bound at residue Ser-112 to Pro-115.

The protein belongs to the Fmt family.

It carries out the reaction L-methionyl-tRNA(fMet) + (6R)-10-formyltetrahydrofolate = N-formyl-L-methionyl-tRNA(fMet) + (6S)-5,6,7,8-tetrahydrofolate + H(+). In terms of biological role, attaches a formyl group to the free amino group of methionyl-tRNA(fMet). The formyl group appears to play a dual role in the initiator identity of N-formylmethionyl-tRNA by promoting its recognition by IF2 and preventing the misappropriation of this tRNA by the elongation apparatus. The chain is Methionyl-tRNA formyltransferase from Shewanella baltica (strain OS223).